The primary structure comprises 204 residues: N-(5'-phosphoribosyl)anthranilate isomerase (204 aa).

The protein belongs to the TrpF family.

It carries out the reaction N-(5-phospho-beta-D-ribosyl)anthranilate = 1-(2-carboxyphenylamino)-1-deoxy-D-ribulose 5-phosphate. It participates in amino-acid biosynthesis; L-tryptophan biosynthesis; L-tryptophan from chorismate: step 3/5. This chain is N-(5'-phosphoribosyl)anthranilate isomerase, found in Bacillus mycoides (strain KBAB4) (Bacillus weihenstephanensis).